The chain runs to 193 residues: Intracellular heme transport protein HutX (193 aa).

Position 116 (Tyr116) interacts with heme.

Homodimer. Interacts with HutZ.

The protein localises to the cytoplasm. In terms of biological role, binds heme. Heme is transferred to the heme-degrading enzyme HutZ via a specific protein-protein interaction. The sequence is that of Intracellular heme transport protein HutX from Vibrio cholerae serotype O1 (strain ATCC 39315 / El Tor Inaba N16961).